A 337-amino-acid chain; its full sequence is uncharacterized protein (337 aa).

In terms of domain architecture, AFP-like spans 279–337 (SIVAKRNIKKGEYLSVDNISFKRPGRGIETKYLSIILNRKIKNDKEEDDIIYWDDLLGD).

To B.subtilis SpsE.

This is an uncharacterized protein from Methanocaldococcus jannaschii (strain ATCC 43067 / DSM 2661 / JAL-1 / JCM 10045 / NBRC 100440) (Methanococcus jannaschii).